The primary structure comprises 180 residues: Large ribosomal subunit protein uL6c (180 aa).

This sequence belongs to the universal ribosomal protein uL6 family. Part of the 50S ribosomal subunit.

It localises to the plastid. It is found in the chloroplast. Its function is as follows. Binds 23S rRNA. This Pyropia yezoensis (Susabi-nori) protein is Large ribosomal subunit protein uL6c (rpl6).